A 289-amino-acid polypeptide reads, in one-letter code: Mas-related G-protein coupled receptor member G (289 aa).

At 1-13 (MLSIFNIWGTFNR) the chain is on the extracellular side. The chain crosses the membrane as a helical span at residues 14–34 (VLFFLSLTVSLAGLAGNTLLL). Over 35 to 49 (WHLGLRIKKGPFNTY) the chain is Cytoplasmic. A helical membrane pass occupies residues 50–70 (LLHLAAADFLFLSCQVGFSIA). The Extracellular portion of the chain corresponds to 71-80 (KIASGYEDTL). Residues 81 to 101 (YFPVTFLWFAVGLWLLAAFIV) form a helical membrane-spanning segment. Residues 102–123 (DCCLSYMFPSFCGPNCRPRYTS) are Cytoplasmic-facing. The helical transmembrane segment at 124 to 144 (FVLCLVIWALTMLAVLLPANA) threads the bilayer. The Extracellular segment spans residues 145 to 164 (CGLLYNRMSLLVCLKYHWVS). The helical transmembrane segment at 165–185 (VVWLGVLASTACGASMFLLVF) threads the bilayer. The Cytoplasmic segment spans residues 186–200 (GNCCSSQPPSKFCKL). A helical membrane pass occupies residues 201 to 221 (AQCSGILLFFCRLPLVFYWCL). Residue Arg222 is a topological domain, extracellular. The chain crosses the membrane as a helical span at residues 223-243 (PVIKFLLPFFFPLATLLACID). Topologically, residues 244–289 (SSAKPLLYYLKGRQLRKEPLQVALNRALGEESQSSSGGISLPMSRV) are cytoplasmic.

This sequence belongs to the G-protein coupled receptor 1 family. Mas subfamily.

Its subcellular location is the cell membrane. In terms of biological role, orphan receptor. May regulate nociceptor function and/or development, including the sensation or modulation of pain. This is Mas-related G-protein coupled receptor member G (Mrgprg) from Rattus norvegicus (Rat).